The primary structure comprises 70 residues: MTTTVKCPTCQKEVIWNSESKFKPFCSDRCKLIDLGDWASEKHAIPVKSEFDPETLDGLGYDEADFFKDQ.

Cys7, Cys10, Cys26, and Cys30 together coordinate Zn(2+).

Belongs to the DNA gyrase inhibitor YacG family. As to quaternary structure, interacts with GyrB. The cofactor is Zn(2+).

Functionally, inhibits all the catalytic activities of DNA gyrase by preventing its interaction with DNA. Acts by binding directly to the C-terminal domain of GyrB, which probably disrupts DNA binding by the gyrase. In Shewanella sediminis (strain HAW-EB3), this protein is DNA gyrase inhibitor YacG.